A 250-amino-acid polypeptide reads, in one-letter code: tRNA (guanine-N(1)-)-methyltransferase (250 aa).

S-adenosyl-L-methionine is bound by residues G115 and 135-140; that span reads LGDFVL.

The protein belongs to the RNA methyltransferase TrmD family. As to quaternary structure, homodimer.

It is found in the cytoplasm. It carries out the reaction guanosine(37) in tRNA + S-adenosyl-L-methionine = N(1)-methylguanosine(37) in tRNA + S-adenosyl-L-homocysteine + H(+). Functionally, specifically methylates guanosine-37 in various tRNAs. This chain is tRNA (guanine-N(1)-)-methyltransferase, found in Legionella pneumophila (strain Paris).